An 870-amino-acid chain; its full sequence is MAEKIYEPQKIEQEVQALWETNQTFKATEQEDKEKFYCLSMFPYPSGRLHMGHVRNYTIGDVVSRFQRMNGKNVLQPMGWDAFGLPAENAALNNNTAPAKWTYQNIDYMKNQLKSLGFGYDWDREVATCKKDYYRWEQWFFTRLYEKGLVYKKNSTVNWDPVDHTVLANEQVIDGRGWRSGALVEQKEIPQWFIKITDYAEELLTDLEQLEDWPEQVRAMQKNWIGRSEGVDITFNLSENAADISSFDVYTTRPDTLYGVTYVAVAAQHPLALHAAQTRPELAEFIESCKNTKVAEAELATMEKKGCDTGLFAIHPLTGEKVAVWVANFVLMGYGSGAVMSVPGHDQRDWEFAQKYGLPIKQVVEPSADEPQECDLTTAAYTDKGVLVNSAEFNGLAFQEAFDAIAAKLEALGAGSKKVNYRLRDWGVSRQRYWGSPIPMLNLENGESVPVPSDQLPVELPEDVQMNGVISPIKADPDWAKTEYNGQPALRETDTFDTFMESSWYYARYCSAQNQDAMLDPTQANYWLPVDQYVGGIEHAILHLLYSRFFHKLLRDEGLVNSDEPYKRLLCQGMVLADSFFREDESGKKEWFSPADVDTVKDEKGRITQATLKADGKPVEHGGMTKMSKSKNNGIDPQHVIDLYGADTIRVFTMFAAPPEQTLEWVDSGVEGANRFIKRVWKLTQDHIDALDGDTAPAIDKTALTGDQKTLRRAVHRTIAKVTDDVGRRQTFNTAVAAIMELLNSLQRAPQSTDQDKAVLREAIESVVLLLNPIAPHMCHILWHDLGHKNDIETAPWPAVDESALVEDEKLIIVQVNGKVRSKITVAADASQEEVQALGLAQENVQQFVDGKTIRKVIYIAGKLLNIVAN.

The 'HIGH' region motif lies at P43–H53. Positions K626–S630 match the 'KMSKS' region motif. ATP is bound at residue K629.

Belongs to the class-I aminoacyl-tRNA synthetase family.

Its subcellular location is the cytoplasm. It carries out the reaction tRNA(Leu) + L-leucine + ATP = L-leucyl-tRNA(Leu) + AMP + diphosphate. This Pseudoalteromonas atlantica (strain T6c / ATCC BAA-1087) protein is Leucine--tRNA ligase.